We begin with the raw amino-acid sequence, 102 residues long: Small ribosomal subunit protein uS10 (102 aa).

Belongs to the universal ribosomal protein uS10 family. Part of the 30S ribosomal subunit.

Its function is as follows. Involved in the binding of tRNA to the ribosomes. This is Small ribosomal subunit protein uS10 from Lactobacillus helveticus (strain DPC 4571).